The chain runs to 405 residues: ATP-sensitive inward rectifier potassium channel 15 (405 aa).

Residues 1-90 (MVARWVKGSE…LQDLWTTVID (90 aa)) are Cytoplasmic-facing. The chain crosses the membrane as a helical span at residues 91 to 117 (MKWRYKLTLFAATFVMTWFLFGVVYYA). Over 118–143 (IAFIHGDLELGESNSNHTPCIMKVDS) the chain is Extracellular. Residues 144-160 (LTGAFLFSLESQTTIGY) constitute an intramembrane region (helical; Pore-forming). Positions 157 to 162 (TIGYGV) match the Selectivity filter motif. Residues 161-169 (GVRSITEEC) lie on the Extracellular side of the membrane. The helical transmembrane segment at 170 to 195 (PHAIFLLVAQLVITTLIEIFITGTFL) threads the bilayer. The Cytoplasmic segment spans residues 196 to 405 (AKIARPKKRA…RSLLLQQSNV (210 aa)).

It belongs to the inward rectifier-type potassium channel (TC 1.A.2.1) family. KCNJ15 subfamily. In terms of assembly, can form heteromultimeric channels with Kir5.1/KCNJ16. Interacts with PATJ.

The protein localises to the membrane. It localises to the cell membrane. The enzyme catalyses K(+)(in) = K(+)(out). Channel activity is regulated by variations of cytosolic pH; reversibly inhibited by acidic pH values. Inhibited by Ba(2+) and Cs(+) in a voltage-dependent manner. In terms of biological role, inward rectifier potassium channels are characterized by a greater tendency to allow potassium to flow into the cell rather than out of it. Their voltage dependence is regulated by the concentration of extracellular potassium; as external potassium is raised, the voltage range of the channel opening shifts to more positive voltages. The inward rectification is mainly due to the blockage of outward current by internal magnesium. The polypeptide is ATP-sensitive inward rectifier potassium channel 15 (Kcnj15) (Rattus norvegicus (Rat)).